Here is a 180-residue protein sequence, read N- to C-terminus: Shikimate kinase (180 aa).

14-19 (GAGKST) provides a ligand contact to ATP. Ser18 contacts Mg(2+). Residues Asp36, Arg60, and Gly82 each coordinate substrate. Arg120 provides a ligand contact to ATP. Residue Arg139 participates in substrate binding.

The protein belongs to the shikimate kinase family. As to quaternary structure, monomer. The cofactor is Mg(2+).

It localises to the cytoplasm. It carries out the reaction shikimate + ATP = 3-phosphoshikimate + ADP + H(+). The protein operates within metabolic intermediate biosynthesis; chorismate biosynthesis; chorismate from D-erythrose 4-phosphate and phosphoenolpyruvate: step 5/7. Functionally, catalyzes the specific phosphorylation of the 3-hydroxyl group of shikimic acid using ATP as a cosubstrate. This chain is Shikimate kinase, found in Chromohalobacter salexigens (strain ATCC BAA-138 / DSM 3043 / CIP 106854 / NCIMB 13768 / 1H11).